The following is a 349-amino-acid chain: Cdc42 effector protein 4 (349 aa).

Lys5 carries the post-translational modification N6-methyllysine. A Phosphoserine modification is found at Ser18. One can recognise a CRIB domain in the interval 27–41; that stretch reads ISAPLGDFRHTMHVG. Ser64, Ser103, Ser107, and Ser116 each carry phosphoserine. Residues 123 to 132 show a composition bias toward basic and acidic residues; sequence KEAAEKDSSK. Disordered regions lie at residues 123-172, 220-240, and 278-349; these read KEAA…LLDE, QWGSEEEEEAGGYRDKEGPSS, and GWAV…EIRV. A phosphoserine mark is found at Ser136, Ser138, Ser140, Ser154, Ser165, Ser223, Ser285, and Ser288. The span at 280-308 shows a compositional bias: low complexity; sequence AVVAPSPSSARSVGSHTTRDSSSLSSYTS. Basic and acidic residues predominate over residues 311-322; it reads LEERSPAFRGPD. Over residues 338–349 the composition is skewed to acidic residues; that stretch reads FMDEEEEDEIRV.

It belongs to the BORG/CEP family. As to quaternary structure, interacts with CDC42 and RHOQ, in a GTP-dependent manner. As to expression, ubiquitous.

The protein localises to the endomembrane system. The protein resides in the cytoplasm. Its subcellular location is the cytoskeleton. Probably involved in the organization of the actin cytoskeleton. May act downstream of CDC42 to induce actin filament assembly leading to cell shape changes. Induces pseudopodia formation, when overexpressed in fibroblasts. This Mus musculus (Mouse) protein is Cdc42 effector protein 4 (Cdc42ep4).